The following is a 459-amino-acid chain: Bifunctional protein GlmU (459 aa).

Residues M1–R229 are pyrophosphorylase. UDP-N-acetyl-alpha-D-glucosamine-binding positions include L8 to G11, K22, Q72, and G77 to T78. D102 contributes to the Mg(2+) binding site. The UDP-N-acetyl-alpha-D-glucosamine site is built by G139, E154, N169, and N227. Position 227 (N227) interacts with Mg(2+). Positions V230–N250 are linker. Residues G251–Q459 are N-acetyltransferase. Residues R332 and K350 each contribute to the UDP-N-acetyl-alpha-D-glucosamine site. The active-site Proton acceptor is H362. UDP-N-acetyl-alpha-D-glucosamine-binding residues include Y365 and N376. Residues A379, N385–Y386, S404, A422, and R439 each bind acetyl-CoA.

The protein in the N-terminal section; belongs to the N-acetylglucosamine-1-phosphate uridyltransferase family. It in the C-terminal section; belongs to the transferase hexapeptide repeat family. As to quaternary structure, homotrimer. Requires Mg(2+) as cofactor.

Its subcellular location is the cytoplasm. It catalyses the reaction alpha-D-glucosamine 1-phosphate + acetyl-CoA = N-acetyl-alpha-D-glucosamine 1-phosphate + CoA + H(+). The enzyme catalyses N-acetyl-alpha-D-glucosamine 1-phosphate + UTP + H(+) = UDP-N-acetyl-alpha-D-glucosamine + diphosphate. It functions in the pathway nucleotide-sugar biosynthesis; UDP-N-acetyl-alpha-D-glucosamine biosynthesis; N-acetyl-alpha-D-glucosamine 1-phosphate from alpha-D-glucosamine 6-phosphate (route II): step 2/2. The protein operates within nucleotide-sugar biosynthesis; UDP-N-acetyl-alpha-D-glucosamine biosynthesis; UDP-N-acetyl-alpha-D-glucosamine from N-acetyl-alpha-D-glucosamine 1-phosphate: step 1/1. Its pathway is bacterial outer membrane biogenesis; LPS lipid A biosynthesis. Catalyzes the last two sequential reactions in the de novo biosynthetic pathway for UDP-N-acetylglucosamine (UDP-GlcNAc). The C-terminal domain catalyzes the transfer of acetyl group from acetyl coenzyme A to glucosamine-1-phosphate (GlcN-1-P) to produce N-acetylglucosamine-1-phosphate (GlcNAc-1-P), which is converted into UDP-GlcNAc by the transfer of uridine 5-monophosphate (from uridine 5-triphosphate), a reaction catalyzed by the N-terminal domain. In Streptococcus pneumoniae (strain Taiwan19F-14), this protein is Bifunctional protein GlmU.